The sequence spans 348 residues: MTAQPQALKIRRPDDWHIHLRDDDMLKTVLPYTSQVFGRAIVMPNLALPITTVAAACAYRDRILAAVPQGHDFTPLMTCYLTNSLDAAELVNGFEQGVFTAAKLYPANATTNSSHGVSDVKAIYPLFEQMQKIGMPLLIHGEVTDAAVDIFDREARFIEQVMEPIRQQFPELKIVFEHITTKEAAQYVQEGNRFLGATITPQHLMFNRNHMLVGGIRPHLFCLPILKRNIHQDALRKAVASGSDRFFLGTDSAPHAKHRKESSCGCAGVFNAPNAIPAYASVFEQLGALDHLEAFCSLNGPRFYGLPVNTDFIELQRVATTQPEEIAMGSETVIPFLAGESLSWSVKA.

Zn(2+) contacts are provided by His17 and His19. Substrate-binding positions include 19-21 (HLR) and Asn45. Zn(2+) is bound by residues Lys103, His140, and His178. Lys103 carries the N6-carboxylysine modification. Residue His140 participates in substrate binding. Leu223 provides a ligand contact to substrate. A Zn(2+)-binding site is contributed by Asp251. The active site involves Asp251. Substrate contacts are provided by His255 and Ala267.

This sequence belongs to the metallo-dependent hydrolases superfamily. DHOase family. Class II DHOase subfamily. Homodimer. Zn(2+) serves as cofactor.

It catalyses the reaction (S)-dihydroorotate + H2O = N-carbamoyl-L-aspartate + H(+). It participates in pyrimidine metabolism; UMP biosynthesis via de novo pathway; (S)-dihydroorotate from bicarbonate: step 3/3. In terms of biological role, catalyzes the reversible cyclization of carbamoyl aspartate to dihydroorotate. This is Dihydroorotase from Serratia proteamaculans (strain 568).